A 172-amino-acid polypeptide reads, in one-letter code: MKVLGIDPGTATTGYGLIRSEAGRVKAITYGTIVTPAQLEMPLRLYQIYRELQALLMEYKPDAVAVEEIFYNRNSKTVITVAQSRGVILMTAAAAGIPVAEYTPLQVKQAVVGYGAAEKKQVQLMVQKILGLQQLPRPDDAADALAVAICHLHSYRLSSFLESSATKAGEKR.

Residues aspartate 7, glutamate 67, and aspartate 140 contribute to the active site. 3 residues coordinate Mg(2+): aspartate 7, glutamate 67, and aspartate 140.

It belongs to the RuvC family. As to quaternary structure, homodimer which binds Holliday junction (HJ) DNA. The HJ becomes 2-fold symmetrical on binding to RuvC with unstacked arms; it has a different conformation from HJ DNA in complex with RuvA. In the full resolvosome a probable DNA-RuvA(4)-RuvB(12)-RuvC(2) complex forms which resolves the HJ. Requires Mg(2+) as cofactor.

It localises to the cytoplasm. It carries out the reaction Endonucleolytic cleavage at a junction such as a reciprocal single-stranded crossover between two homologous DNA duplexes (Holliday junction).. Its function is as follows. The RuvA-RuvB-RuvC complex processes Holliday junction (HJ) DNA during genetic recombination and DNA repair. Endonuclease that resolves HJ intermediates. Cleaves cruciform DNA by making single-stranded nicks across the HJ at symmetrical positions within the homologous arms, yielding a 5'-phosphate and a 3'-hydroxyl group; requires a central core of homology in the junction. The consensus cleavage sequence is 5'-(A/T)TT(C/G)-3'. Cleavage occurs on the 3'-side of the TT dinucleotide at the point of strand exchange. HJ branch migration catalyzed by RuvA-RuvB allows RuvC to scan DNA until it finds its consensus sequence, where it cleaves and resolves the cruciform DNA. The chain is Crossover junction endodeoxyribonuclease RuvC from Syntrophomonas wolfei subsp. wolfei (strain DSM 2245B / Goettingen).